Reading from the N-terminus, the 452-residue chain is Probable intron-encoded endonuclease 2 (452 aa).

3 helical membrane-spanning segments follow: residues 1–21, 22–42, and 57–77; these read MNITLILFLIGILGFVLNRKN, IILMLISIEIMLLAITFLILV, and IYIIVVAGAESAIGLAILVAF. The tract at residues 1–80 is ndh-4L exon 1 encoded; the sequence is MNITLILFLI…LAILVAFYRL (80 aa). A ndh-4L intron 1 encoded region spans residues 81-452; sequence INSPVKNPRS…SLEGGMNKNI (372 aa).

It in the N-terminal section; belongs to the complex I subunit 4L family. The protein in the C-terminal section; belongs to the LAGLIDADG endonuclease family.

It is found in the mitochondrion membrane. In terms of biological role, mitochondrial DNA endonuclease involved in intron homing. The chain is Probable intron-encoded endonuclease 2 from Neurospora crassa (strain ATCC 24698 / 74-OR23-1A / CBS 708.71 / DSM 1257 / FGSC 987).